We begin with the raw amino-acid sequence, 534 residues long: Ankyrin repeat domain-containing protein 34C (534 aa).

ANK repeat units follow at residues 10–39 (TDGN…YINE), 43–80 (KGET…DPNI), 84–114 (SGKT…DPSL), and 118–147 (TGAS…AKGK). Positions 159–205 (SGTKTTKQYLNVPPSPKVEDRQSPPLCTTPSDVELKTSGLASPPSEK) are disordered. Ser-301 carries the phosphoserine modification. Disordered regions lie at residues 332–368 (YEKG…LKDP) and 384–403 (QPVG…GPLD). Residue Ser-446 is modified to Phosphoserine. The disordered stretch occupies residues 480–503 (SKPASPLASGLKSMAPVAPNSPKR).

This sequence belongs to the ANKRD34 family.

This Mus musculus (Mouse) protein is Ankyrin repeat domain-containing protein 34C (Ankrd34c).